The sequence spans 571 residues: Proline--tRNA ligase (571 aa).

This sequence belongs to the class-II aminoacyl-tRNA synthetase family. ProS type 1 subfamily. Homodimer.

It localises to the cytoplasm. The catalysed reaction is tRNA(Pro) + L-proline + ATP = L-prolyl-tRNA(Pro) + AMP + diphosphate. Its function is as follows. Catalyzes the attachment of proline to tRNA(Pro) in a two-step reaction: proline is first activated by ATP to form Pro-AMP and then transferred to the acceptor end of tRNA(Pro). As ProRS can inadvertently accommodate and process non-cognate amino acids such as alanine and cysteine, to avoid such errors it has two additional distinct editing activities against alanine. One activity is designated as 'pretransfer' editing and involves the tRNA(Pro)-independent hydrolysis of activated Ala-AMP. The other activity is designated 'posttransfer' editing and involves deacylation of mischarged Ala-tRNA(Pro). The misacylated Cys-tRNA(Pro) is not edited by ProRS. The polypeptide is Proline--tRNA ligase (Pseudomonas syringae pv. tomato (strain ATCC BAA-871 / DC3000)).